Reading from the N-terminus, the 443-residue chain is ATP-dependent protease ATPase subunit HslU (443 aa).

Residues V18, 60–65 (GVGKTE), D255, E321, and R393 each bind ATP.

The protein belongs to the ClpX chaperone family. HslU subfamily. As to quaternary structure, a double ring-shaped homohexamer of HslV is capped on each side by a ring-shaped HslU homohexamer. The assembly of the HslU/HslV complex is dependent on binding of ATP.

The protein resides in the cytoplasm. ATPase subunit of a proteasome-like degradation complex; this subunit has chaperone activity. The binding of ATP and its subsequent hydrolysis by HslU are essential for unfolding of protein substrates subsequently hydrolyzed by HslV. HslU recognizes the N-terminal part of its protein substrates and unfolds these before they are guided to HslV for hydrolysis. This Colwellia psychrerythraea (strain 34H / ATCC BAA-681) (Vibrio psychroerythus) protein is ATP-dependent protease ATPase subunit HslU.